The chain runs to 352 residues: Histidine biosynthesis bifunctional protein HisB (352 aa).

The segment at 1-163 (MKKILFIDRD…MVASAIINDA (163 aa)) is histidinol-phosphatase. Asp-8 functions as the Nucleophile in the catalytic mechanism. 2 residues coordinate Mg(2+): Asp-8 and Asp-10. Asp-10 (proton donor) is an active-site residue. Zn(2+) is bound by residues Cys-91, His-93, Cys-99, and Cys-101. Asp-128 lines the Mg(2+) pocket. The segment at 164-352 (RKASVQRKTK…NYLPSTKGVL (189 aa)) is imidazoleglycerol-phosphate dehydratase.

It in the N-terminal section; belongs to the histidinol-phosphatase family. The protein in the C-terminal section; belongs to the imidazoleglycerol-phosphate dehydratase family. Mg(2+) serves as cofactor. Requires Zn(2+) as cofactor.

The protein resides in the cytoplasm. It catalyses the reaction D-erythro-1-(imidazol-4-yl)glycerol 3-phosphate = 3-(imidazol-4-yl)-2-oxopropyl phosphate + H2O. It carries out the reaction L-histidinol phosphate + H2O = L-histidinol + phosphate. Its pathway is amino-acid biosynthesis; L-histidine biosynthesis; L-histidine from 5-phospho-alpha-D-ribose 1-diphosphate: step 6/9. It functions in the pathway amino-acid biosynthesis; L-histidine biosynthesis; L-histidine from 5-phospho-alpha-D-ribose 1-diphosphate: step 8/9. This is Histidine biosynthesis bifunctional protein HisB from Legionella pneumophila subsp. pneumophila (strain Philadelphia 1 / ATCC 33152 / DSM 7513).